The chain runs to 471 residues: Light-independent protochlorophyllide reductase subunit N (471 aa).

[4Fe-4S] cluster-binding residues include C22, C47, and C107.

Belongs to the BchN/ChlN family. Protochlorophyllide reductase is composed of three subunits; ChlL, ChlN and ChlB. Forms a heterotetramer of two ChlB and two ChlN subunits. It depends on [4Fe-4S] cluster as a cofactor.

The protein resides in the plastid. It localises to the chloroplast. The enzyme catalyses chlorophyllide a + oxidized 2[4Fe-4S]-[ferredoxin] + 2 ADP + 2 phosphate = protochlorophyllide a + reduced 2[4Fe-4S]-[ferredoxin] + 2 ATP + 2 H2O. It functions in the pathway porphyrin-containing compound metabolism; chlorophyll biosynthesis (light-independent). Functionally, component of the dark-operative protochlorophyllide reductase (DPOR) that uses Mg-ATP and reduced ferredoxin to reduce ring D of protochlorophyllide (Pchlide) to form chlorophyllide a (Chlide). This reaction is light-independent. The NB-protein (ChlN-ChlB) is the catalytic component of the complex. This chain is Light-independent protochlorophyllide reductase subunit N, found in Huperzia lucidula (Shining clubmoss).